Consider the following 246-residue polypeptide: tRNA (guanine-N(1)-)-methyltransferase (246 aa).

S-adenosyl-L-methionine is bound by residues glycine 113 and 133-138 (IGDYVL).

It belongs to the RNA methyltransferase TrmD family. Homodimer.

The protein localises to the cytoplasm. It carries out the reaction guanosine(37) in tRNA + S-adenosyl-L-methionine = N(1)-methylguanosine(37) in tRNA + S-adenosyl-L-homocysteine + H(+). Specifically methylates guanosine-37 in various tRNAs. In Yersinia enterocolitica serotype O:8 / biotype 1B (strain NCTC 13174 / 8081), this protein is tRNA (guanine-N(1)-)-methyltransferase.